Here is a 142-residue protein sequence, read N- to C-terminus: Large ribosomal subunit protein uL11 (142 aa).

A disordered region spans residues 84 to 103 (AGVKSGSGRPNSDKVGTVTD).

Belongs to the universal ribosomal protein uL11 family. In terms of assembly, part of the ribosomal stalk of the 50S ribosomal subunit. Interacts with L10 and the large rRNA to form the base of the stalk. L10 forms an elongated spine to which L12 dimers bind in a sequential fashion forming a multimeric L10(L12)X complex. In terms of processing, one or more lysine residues are methylated.

Forms part of the ribosomal stalk which helps the ribosome interact with GTP-bound translation factors. The protein is Large ribosomal subunit protein uL11 of Aliivibrio salmonicida (strain LFI1238) (Vibrio salmonicida (strain LFI1238)).